The sequence spans 353 residues: UPF0283 membrane protein YcjF (353 aa).

3 helical membrane passes run 70–90 (MVMG…VQWT), 100–120 (VALG…GSVV), and 213–233 (ESTL…FIAW).

This sequence belongs to the UPF0283 family.

Its subcellular location is the cell inner membrane. This Shigella boydii serotype 4 (strain Sb227) protein is UPF0283 membrane protein YcjF.